Consider the following 318-residue polypeptide: Pantothenate kinase (318 aa).

96 to 103 contributes to the ATP binding site; sequence GSVAVGKS.

This sequence belongs to the prokaryotic pantothenate kinase family.

Its subcellular location is the cytoplasm. The catalysed reaction is (R)-pantothenate + ATP = (R)-4'-phosphopantothenate + ADP + H(+). It participates in cofactor biosynthesis; coenzyme A biosynthesis; CoA from (R)-pantothenate: step 1/5. The sequence is that of Pantothenate kinase from Coxiella burnetii (strain CbuK_Q154) (Coxiella burnetii (strain Q154)).